Here is a 293-residue protein sequence, read N- to C-terminus: Methylsterol monooxygenase 1 (293 aa).

Transmembrane regions (helical) follow at residues 55–75 (LIVH…FQFI) and 100–120 (GILF…YYFT). The Fatty acid hydroxylase domain occupies 144 to 274 (GCAVIEDTWH…FTWWDRIFGT (131 aa)). The Histidine box-1 motif lies at 157-161 (HRLLH). The short motif at 170–174 (HKVHH) is the Histidine box-2 element. A helical transmembrane segment spans residues 199–219 (FFIGIVLLCDHVILLWAWVTM). Positions 249–255 (HHDFHHM) match the Histidine box-3 motif.

It belongs to the sterol desaturase family. Fe cation serves as cofactor. Ubiquitinated by MARCHF6, leading to proteasomal degradation.

The protein localises to the endoplasmic reticulum membrane. It carries out the reaction 4,4-dimethyl-5alpha-cholest-7-en-3beta-ol + 6 Fe(II)-[cytochrome b5] + 3 O2 + 5 H(+) = 4alpha-carboxy-4beta-methyl-5alpha-cholest-7-ene-3beta-ol + 6 Fe(III)-[cytochrome b5] + 4 H2O. It catalyses the reaction 4,4-dimethyl-5alpha-cholesta-8,24-dien-3beta-ol + 6 Fe(II)-[cytochrome b5] + 3 O2 + 5 H(+) = 4beta-methylzymosterol-4alpha-carboxylate + 6 Fe(III)-[cytochrome b5] + 4 H2O. The catalysed reaction is 4alpha-methylzymosterol + 6 Fe(II)-[cytochrome b5] + 3 O2 + 5 H(+) = 4alpha-carboxyzymosterol + 6 Fe(III)-[cytochrome b5] + 4 H2O. The enzyme catalyses 4alpha-methyl-5alpha-cholest-7-en-3beta-ol + 6 Fe(II)-[cytochrome b5] + 3 O2 + 5 H(+) = 4alpha-carboxy-5alpha-cholest-7-en-3beta-ol + 6 Fe(III)-[cytochrome b5] + 4 H2O. It carries out the reaction 4,4-dimethyl-5alpha-cholest-8-en-3beta-ol + 6 Fe(II)-[cytochrome b5] + 3 O2 + 5 H(+) = 4alpha-carboxy-4beta-methyl-5alpha-cholest-8-en-3beta-ol + 6 Fe(III)-[cytochrome b5] + 4 H2O. It catalyses the reaction 4alpha-methyl-5alpha-cholest-8-en-3beta-ol + 6 Fe(II)-[cytochrome b5] + 3 O2 + 5 H(+) = 4alpha-carboxy-5alpha-cholest-8-ene-3beta-ol + 6 Fe(III)-[cytochrome b5] + 4 H2O. Its pathway is steroid biosynthesis; zymosterol biosynthesis; zymosterol from lanosterol: step 3/6. It participates in steroid biosynthesis; cholesterol biosynthesis. Catalyzes the three-step monooxygenation required for the demethylation of 4,4-dimethyl and 4alpha-methylsterols, which can be subsequently metabolized to cholesterol. This Rattus norvegicus (Rat) protein is Methylsterol monooxygenase 1 (Msmo1).